The primary structure comprises 409 residues: DNA double-strand break repair protein Mre11 (409 aa).

Mn(2+) contacts are provided by Asp-9, His-11, Asp-50, and Glu-85. The Proton donor role is filled by His-86. 3 residues coordinate Mn(2+): His-170, His-199, and His-201.

The protein belongs to the MRE11/RAD32 family. In terms of assembly, homodimer. Forms a heterotetramer composed of two Mre11 subunits and two Rad50 subunits. Mn(2+) serves as cofactor.

Nuclease activity is regulated by Rad50. Functionally, part of the Rad50/Mre11 complex, which is involved in the early steps of DNA double-strand break (DSB) repair. The complex may facilitate opening of the processed DNA ends to aid in the recruitment of HerA and NurA. Mre11 binds to DSB ends and has both double-stranded 3'-5' exonuclease activity and single-stranded endonuclease activity. The polypeptide is DNA double-strand break repair protein Mre11 (Aeropyrum pernix (strain ATCC 700893 / DSM 11879 / JCM 9820 / NBRC 100138 / K1)).